We begin with the raw amino-acid sequence, 120 residues long: UPF0102 protein FRAAL5785 (120 aa).

The protein belongs to the UPF0102 family.

This is UPF0102 protein FRAAL5785 from Frankia alni (strain DSM 45986 / CECT 9034 / ACN14a).